Consider the following 581-residue polypeptide: Sodium/hydrogen exchanger 8 (581 aa).

The next 11 helical transmembrane spans lie at 60 to 80 (MTIFFSLLVLAICIILVHLLI), 84 to 104 (LHFLPESVAVVSLGILMGAVI), 123 to 143 (PNMFFLLLLPPIIFESGYSLH), 156 to 176 (LFAVFGTAISAFVVGGGIYFL), 191 to 211 (FAFGSLISAVDPVATIAIFNA), 264 to 284 (FLKMFFGSAALGTLTGLISAL), 311 to 331 (GLAEGISLSGIMAILFSGIVM), 354 to 374 (VAFLCETCVFAFLGLSIFSFP), 379 to 399 (ISFVIWCIVLVLFGRAVNIFP), 417 to 437 (MFIMWFSGLRGAIPYALSLHL), and 451 to 471 (TTIVIVLFTILLLGGSTMPLI). Residue Thr-510 is modified to Phosphothreonine. Residues Ser-571 and Ser-573 each carry the phosphoserine modification.

This sequence belongs to the monovalent cation:proton antiporter 1 (CPA1) transporter (TC 2.A.36) family. In terms of tissue distribution, ubiquitous. Strongly expressed in skeletal muscle and kidney. Detected throughout the entire gastrointestinal tract, with high expression detected in stomach, duodenum and ascending colon.

Its subcellular location is the golgi apparatus membrane. The protein resides in the golgi apparatus. The protein localises to the trans-Golgi network membrane. It localises to the endosome. It is found in the multivesicular body membrane. Its subcellular location is the apical cell membrane. The protein resides in the cytoplasmic vesicle. The protein localises to the secretory vesicle. It localises to the acrosome. It catalyses the reaction Na(+)(in) + H(+)(out) = Na(+)(out) + H(+)(in). HOE642 inhibits SLC9A8 activity. Its function is as follows. Na(+)/H(+) antiporter. Mediates the electoneutral exchange of intracellular H(+) ions for extracellular Na(+) in 1:1 stoichiometry. Acts as an Na(+)/H(+) exchanger in the trans-Golgi. Contributes to the regulation of pH regulation of Golgi apparatus, and consequently, in protein trafficking and endosomal morphology. In germ cells, plays a crucial role in acrosome biogenesis and sperm development, probably by playing a role in the fusion of the Golgi-derived vesicles that form the acrosomal cap. Can also be active at the cell surface of specialized cells. In the small intestine, at the cell membrane, plays a major physiological role in transepithelial absorption of Na(+) and regulates intracellular pH homeostasis of intestinal epithelial cells. Acts as an important regulator of mucosal integrity in the intestine and in the stomach, could mediate the pH fluctuation necessary for mucin exocytosis or assist membrane trafficking of other proteins. Plays a role in photoreceptor survival and in the maintenance of intracellular pH homeostasis in retinal pigment epithelium (RPE cells). The sequence is that of Sodium/hydrogen exchanger 8 from Homo sapiens (Human).